A 160-amino-acid chain; its full sequence is Cell division protein SepF (160 aa).

Residues 18-30 are compositionally biased toward acidic residues; it reads AEGEDDFEDDVDT. The disordered stretch occupies residues 18-72; sequence AEGEDDFEDDVDTGETSFDSDHSVTPMPSSSASASTPSAPREQSNPFQGGRVSRI. The segment covering 45–57 has biased composition (low complexity); that stretch reads PSSSASASTPSAP.

It belongs to the SepF family. Homodimer. Interacts with FtsZ.

The protein resides in the cytoplasm. Cell division protein that is part of the divisome complex and is recruited early to the Z-ring. Probably stimulates Z-ring formation, perhaps through the cross-linking of FtsZ protofilaments. Its function overlaps with FtsA. This chain is Cell division protein SepF, found in Bifidobacterium adolescentis (strain ATCC 15703 / DSM 20083 / NCTC 11814 / E194a).